The chain runs to 603 residues: Probable NOT transcription complex subunit VIP2 (603 aa).

Polar residues-rich tracts occupy residues 1–28 and 36–70; these read MQGTLTSRNTAINNVPSSGVQQSGNNLS and NLPSALSQIPQGNSHGHSGMTSRGGTSVVGNPGYS. Disordered stretches follow at residues 1–70, 212–242, 306–335, and 355–377; these read MQGT…PGYS, NDGSPFDINDFPQLSSRPSSAGGPQGQLGSL, AGFNLGGTYSSNRPQQQLQHAPSVSSGGVS, and SSHSSYQQQGGGPPGIGLRPLNS. Residues 312-335 show a composition bias toward polar residues; that stretch reads GTYSSNRPQQQLQHAPSVSSGGVS.

It belongs to the CNOT2/3/5 family. In terms of assembly, binds to VIP1. Interacts with Agrobacterium tumefaciens VirE2. Forms a complex made of Agrobacterium VirE2, VIP1, VIP2 and single-stranded DNA (ssDNA).

It localises to the nucleus. Its function is as follows. Transcriptional regulator required for Agrobacterium-mediated stable genetic transformation by T-DNA integration in host genome, but not for T-DNA transient expression. The sequence is that of Probable NOT transcription complex subunit VIP2 (VIP2) from Nicotiana benthamiana.